A 93-amino-acid chain; its full sequence is Cell division protein FtsB (93 aa).

Topologically, residues 1 to 3 (MRV) are cytoplasmic. Residues 4–21 (TLVVLLALFLALQYRLWF) form a helical membrane-spanning segment. Residues 22-93 (GKNSLPDYWR…FFRLVPDRNP (72 aa)) are Periplasmic-facing. The stretch at 28–75 (DYWRLQQEVSNQKNTNENLERRNQLIYADIEDLREGEDALEERARNEL) forms a coiled coil.

It belongs to the FtsB family. Part of a complex composed of FtsB, FtsL and FtsQ.

The protein localises to the cell inner membrane. Essential cell division protein. May link together the upstream cell division proteins, which are predominantly cytoplasmic, with the downstream cell division proteins, which are predominantly periplasmic. The polypeptide is Cell division protein FtsB (Idiomarina loihiensis (strain ATCC BAA-735 / DSM 15497 / L2-TR)).